Reading from the N-terminus, the 344-residue chain is Methionine aminopeptidase 1C, chloroplastic/mitochondrial (344 aa).

His-172 serves as a coordination point for substrate. A divalent metal cation-binding residues include Asp-189, Asp-200, and His-262. His-269 lines the substrate pocket. The a divalent metal cation site is built by Glu-296 and Glu-327.

The protein belongs to the peptidase M24A family. Methionine aminopeptidase type 1 subfamily. The cofactor is Co(2+). Zn(2+) serves as cofactor. Requires Mn(2+) as cofactor. Fe(2+) is required as a cofactor. Ubiquitous.

It is found in the plastid. The protein resides in the chloroplast. It localises to the mitochondrion. It carries out the reaction Release of N-terminal amino acids, preferentially methionine, from peptides and arylamides.. In terms of biological role, removes the N-terminal methionine from nascent proteins. The N-terminal methionine is often cleaved when the second residue in the primary sequence is small and uncharged (Met-Ala-, Cys, Gly, Pro, Ser, Thr, or Val). In Arabidopsis thaliana (Mouse-ear cress), this protein is Methionine aminopeptidase 1C, chloroplastic/mitochondrial (MAP1C).